The sequence spans 480 residues: Acyl-coenzyme A synthetase ACSM6, mitochondrial (480 aa).

A mitochondrion-targeting transit peptide spans 1–21 (MLGRFQPFSLVRSFRLGFEAC). ATP contacts are provided by residues 226 to 234 (TKGTTGAPK), 366 to 371 (EGYGQT), Asp-453, and Arg-468.

It belongs to the ATP-dependent AMP-binding enzyme family. Monomer. Mg(2+) is required as a cofactor. It depends on Mn(2+) as a cofactor.

It is found in the mitochondrion. The enzyme catalyses a medium-chain fatty acid + ATP + CoA = a medium-chain fatty acyl-CoA + AMP + diphosphate. Functionally, catalyzes the activation of fatty acids by CoA to produce an acyl-CoA, the first step in fatty acid metabolism. This is Acyl-coenzyme A synthetase ACSM6, mitochondrial (ACSM6) from Homo sapiens (Human).